Consider the following 1157-residue polypeptide: Voltage-dependent calcium channel subunit alpha-2/delta-2 (1157 aa).

The signal sequence occupies residues 1–18; that stretch reads MAVPARTCGASWPGPVRT. The disordered stretch occupies residues 1–37; sequence MAVPARTCGASWPGPVRTARPWPGRGPRPCPDPRGPA. Residues 19-1119 lie on the Extracellular side of the membrane; sequence ARPWPGRGPR…TEDTSDCGRG (1101 aa). Over residues 24–34 the composition is skewed to pro residues; it reads GRGPRPCPDPR. Asn205 is a glycosylation site (N-linked (GlcNAc...) asparagine). The VWFA domain maps to 294-472; it reads DMVIIVDVSG…INTQEYLDVL (179 aa). A divalent metal cation-binding residues include Asp300, Ser302, and Ser304. The short motif at 300 to 304 is the MIDAS-like motif element; that stretch reads DVSGS. Residues Asn389, Asn421, Asn510, Asn543, Asn627, and Asn864 are each glycosylated (N-linked (GlcNAc...) asparagine). Cys446 and Cys1104 are oxidised to a cystine. A Cache domain is found at 488 to 577; the sequence is WTNVYEDALG…KPQITNFREP (90 aa). The chain crosses the membrane as a helical span at residues 1120–1140; that stretch reads ASFPPSLGVLVSLQLLLLLGL. The Cytoplasmic portion of the chain corresponds to 1141–1157; it reads PPRPQPQIHSFTPSRRL.

Belongs to the calcium channel subunit alpha-2/delta family. As to quaternary structure, dimer formed of alpha-2-2 and delta-2 chains; disulfide-linked. Voltage-dependent calcium channels are multisubunit complexes, consisting of alpha-1 (CACNA1), alpha-2 (CACNA2D), beta (CACNB) and delta (CACNA2D) subunits in a 1:1:1:1 ratio. In terms of processing, N-glycosylated. May be proteolytically processed into subunits alpha-2-2 and delta-2 that are disulfide-linked. It is however unclear whether such cleavage really takes place in vivo and has a functional role. As to expression, in heart, it is highly expressed in atrium and at lower level in ventricle.

The protein localises to the membrane. Functionally, the alpha-2/delta subunit of voltage-dependent calcium channels regulates calcium current density and activation/inactivation kinetics of the calcium channel. Acts as a regulatory subunit for P/Q-type calcium channel (CACNA1A), N-type (CACNA1B), L-type (CACNA1C OR CACNA1D) and possibly T-type (CACNA1G). Overexpression induces apoptosis. The polypeptide is Voltage-dependent calcium channel subunit alpha-2/delta-2 (Cacna2d2) (Rattus norvegicus (Rat)).